Here is a 319-residue protein sequence, read N- to C-terminus: Polyprenal reductase (319 aa).

The Cytoplasmic portion of the chain corresponds to 1–12; it reads MQLVQLLPPGVS. Residues 13-33 form a helical membrane-spanning segment; that stretch reads LLALVWLAVDAAFLTALLLYL. Residues 34 to 79 lie on the Lumenal side of the membrane; the sequence is QRGCDSGRSLLCSVFQDLIRYGKTKSGLRRPSWLQWFDIPKRCFWH. A helical membrane pass occupies residues 80–100; the sequence is FYFVSLVWNGFLLWILLHLLL. Over 101 to 122 the chain is Cytoplasmic; sequence QSVPVPEWLQAVLQFLCAGSEP. The helical transmembrane segment at 123-143 threads the bilayer; it reads QVLGGELSVVLAFSLLWLHSL. The Lumenal portion of the chain corresponds to 144-158; sequence RRLLECLFVSIFSNG. A helical transmembrane segment spans residues 159–179; sequence VIHFVQYCFGLGYYILIGFTI. At 180-195 the chain is on the cytoplasmic side; that stretch reads LGYCPLDRRTAVSLDD. A helical membrane pass occupies residues 196 to 216; sequence LLMQGNWYHILGLTLYVWASL. Over 217 to 266 the chain is Lumenal; the sequence is HQYTCHCILADLRKSASGAIINLKHAVPTGDWFEKVSCPHYFAELLIYLS. The chain crosses the membrane as a helical span at residues 267–287; the sequence is IAVVFGLLNTIWWLVVLYVLL. Topologically, residues 288-319 are cytoplasmic; sequence SQALAAVLCHEFYHEKFDSYPIHRKAFIPLIF.

The protein belongs to the steroid 5-alpha reductase family. Polyprenal reductase subfamily.

Its subcellular location is the endoplasmic reticulum membrane. It catalyses the reaction a di-trans,poly-cis-dolichal + NADP(+) = a di-trans,poly-cis-polyprenal + NADPH + H(+). It carries out the reaction a 3-oxo-5alpha-steroid + NADP(+) = a 3-oxo-Delta(4)-steroid + NADPH + H(+). The catalysed reaction is androst-4-ene-3,17-dione + NADPH + H(+) = 5alpha-androstan-3,17-dione + NADP(+). The enzyme catalyses 17beta-hydroxy-5alpha-androstan-3-one + NADP(+) = testosterone + NADPH + H(+). The protein operates within protein modification; protein glycosylation. Plays a key role in early steps of protein N-linked glycosylation by being involved in the conversion of polyprenol into dolichol. Acts as a polyprenal reductase that mediates the reduction of polyprenal into dolichal in a NADP-dependent mechanism. Dolichols are required for the synthesis of dolichol-linked monosaccharides and the oligosaccharide precursor used for N-glycosylation. Also able to convert testosterone (T) into 5-alpha-dihydrotestosterone (DHT). This chain is Polyprenal reductase (srd5a3), found in Xenopus laevis (African clawed frog).